A 223-amino-acid chain; its full sequence is Large ribosomal subunit protein uL3 (223 aa).

The interval 137-157 is disordered; sequence GRASHGNSRSHNVPGSIGMAQ. Gln-157 bears the N5-methylglutamine mark.

This sequence belongs to the universal ribosomal protein uL3 family. As to quaternary structure, part of the 50S ribosomal subunit. Forms a cluster with proteins L14 and L19. Methylated by PrmB.

Its function is as follows. One of the primary rRNA binding proteins, it binds directly near the 3'-end of the 23S rRNA, where it nucleates assembly of the 50S subunit. This Burkholderia pseudomallei (strain 1106a) protein is Large ribosomal subunit protein uL3.